We begin with the raw amino-acid sequence, 123 residues long: uncharacterized protein (123 aa).

This is an uncharacterized protein from Aquifex aeolicus (strain VF5).